We begin with the raw amino-acid sequence, 446 residues long: Serine--tRNA ligase, mitochondrial (446 aa).

251–253 (TAE) is a binding site for L-serine. ATP is bound by residues 284–286 (RAE) and valine 300. L-serine is bound at residue glutamate 307. 371–374 (EISS) is an ATP binding site. Residue threonine 407 coordinates L-serine.

The protein belongs to the class-II aminoacyl-tRNA synthetase family. Type-1 seryl-tRNA synthetase subfamily. In terms of assembly, homodimer. The tRNA molecule binds across the dimer.

It is found in the mitochondrion matrix. It catalyses the reaction tRNA(Ser) + L-serine + ATP = L-seryl-tRNA(Ser) + AMP + diphosphate + H(+). In terms of biological role, catalyzes the attachment of serine to tRNA(Ser). This chain is Serine--tRNA ligase, mitochondrial (DIA4), found in Saccharomyces cerevisiae (strain ATCC 204508 / S288c) (Baker's yeast).